We begin with the raw amino-acid sequence, 730 residues long: Catalase-peroxidase (730 aa).

Positions 1–25 (MEEKKCPVTGHTQHTPTGGGTKNKD) are disordered. The segment at residues 95–218 (WHSAGTYRLN…LAAVQMGLIY (124 aa)) is a cross-link (tryptophyl-tyrosyl-methioninium (Trp-Tyr) (with M-244)). Catalysis depends on His-96, which acts as the Proton acceptor. Positions 218–244 (YVNPEGPNGQPSVLASGRDVRDTFKRM) form a cross-link, tryptophyl-tyrosyl-methioninium (Tyr-Met) (with W-95). Position 259 (His-259) interacts with heme b.

Belongs to the peroxidase family. Peroxidase/catalase subfamily. As to quaternary structure, homodimer or homotetramer. The cofactor is heme b. Formation of the three residue Trp-Tyr-Met cross-link is important for the catalase, but not the peroxidase activity of the enzyme.

It carries out the reaction H2O2 + AH2 = A + 2 H2O. The enzyme catalyses 2 H2O2 = O2 + 2 H2O. In terms of biological role, bifunctional enzyme with both catalase and broad-spectrum peroxidase activity. The sequence is that of Catalase-peroxidase from Desulfitobacterium hafniense (strain Y51).